Reading from the N-terminus, the 1005-residue chain is Translocated actin-recruiting phosphoprotein (1005 aa).

The segment covering 1–10 (MTNSISGDQP) has biased composition (polar residues). Disordered regions lie at residues 1–36 (MTNSISGDQPTVTTFTSSTTSASGASGSLGASSVST), 74–128 (PTVT…DYEP), 191–214 (SIDDSSTSDPENTSGGAAALNSLR), 343–365 (SIDDSSTSDPENTSGGAAALNSL), 611–645 (WGTQAGPSSEDDGISFSNETPGAGPAAAPSPTPSS), 661–748 (NIRD…DGPA), and 792–847 (TGTS…TSLM). 2 stretches are compositionally biased toward low complexity: residues 11 to 36 (TVTTFTSSTTSASGASGSLGASSVST) and 74 to 121 (PTVT…SSDH). 2 stretches are compositionally biased toward polar residues: residues 191–205 (SIDDSSTSDPENTSG) and 343–357 (SIDDSSTSDPENTSG). Composition is skewed to low complexity over residues 661–700 (NIRDTNVNTTNTTPTTQSTDASTDTSDIDNINTNNQTDDI), 715–734 (GDISETESSSGDDSGSVSSS), and 831–846 (STTTLRTGTGATTTSL).

The protein belongs to the chlamydial CPn_0572/CT_456/TC_0741 family. Post-translationally, phosphorylated on a tyrosine on attachment to the host cell. Tyrosine phosphorylation is temporally and spatially associated with recruitment of actin to the site of chlamydial entry. Phosphorylated Tarp seems to remain cytoplasmically exposed on the inclusion membrane at one side of internalized elementary bodies for several hours after entry.

Its subcellular location is the secreted. Its function is as follows. Appears to initiate or participate in signaling events that regulate the actin recruitment, which ultimately leads to internalization. The sequence is that of Translocated actin-recruiting phosphoprotein (tarP) from Chlamydia trachomatis serovar L2 (strain ATCC VR-902B / DSM 19102 / 434/Bu).